Consider the following 310-residue polypeptide: Cytochrome f (310 aa).

Residues 1–27 (MRRHLSLFLGSLVIGLALLIAPAASWA) form the signal peptide. The heme site is built by Y28, C48, C51, and H52. Residues 277 to 297 (IYGLLAFFAAVALAQIMLVLK) traverse the membrane as a helical segment.

It belongs to the cytochrome f family. In terms of assembly, the 4 large subunits of the cytochrome b6-f complex are cytochrome b6, subunit IV (17 kDa polypeptide, PetD), cytochrome f and the Rieske protein, while the 4 small subunits are PetG, PetL, PetM and PetN. The complex functions as a dimer. The cofactor is heme.

The protein resides in the cellular thylakoid membrane. In terms of biological role, component of the cytochrome b6-f complex, which mediates electron transfer between photosystem II (PSII) and photosystem I (PSI), cyclic electron flow around PSI, and state transitions. The protein is Cytochrome f of Synechococcus sp. (strain CC9605).